The chain runs to 92 residues: UPF0223 protein SSA_0938 (92 aa).

Belongs to the UPF0223 family.

The protein is UPF0223 protein SSA_0938 of Streptococcus sanguinis (strain SK36).